The chain runs to 248 residues: Adenosylcobinamide-GDP ribazoletransferase (248 aa).

The next 6 helical transmembrane spans lie at F36–L56, F59–G79, F113–V133, C137–L157, I170–M190, and I199–L219.

This sequence belongs to the CobS family. Mg(2+) is required as a cofactor.

Its subcellular location is the cell membrane. The catalysed reaction is alpha-ribazole + adenosylcob(III)inamide-GDP = adenosylcob(III)alamin + GMP + H(+). It catalyses the reaction alpha-ribazole 5'-phosphate + adenosylcob(III)inamide-GDP = adenosylcob(III)alamin 5'-phosphate + GMP + H(+). It functions in the pathway cofactor biosynthesis; adenosylcobalamin biosynthesis; adenosylcobalamin from cob(II)yrinate a,c-diamide: step 7/7. In terms of biological role, joins adenosylcobinamide-GDP and alpha-ribazole to generate adenosylcobalamin (Ado-cobalamin). Also synthesizes adenosylcobalamin 5'-phosphate from adenosylcobinamide-GDP and alpha-ribazole 5'-phosphate. This is Adenosylcobinamide-GDP ribazoletransferase from Clostridium botulinum (strain 657 / Type Ba4).